We begin with the raw amino-acid sequence, 215 residues long: Pyrrolidone-carboxylate peptidase (215 aa).

Catalysis depends on residues Glu-78, Cys-141, and His-165.

This sequence belongs to the peptidase C15 family. As to quaternary structure, homotetramer.

The protein resides in the cytoplasm. The catalysed reaction is Release of an N-terminal pyroglutamyl group from a polypeptide, the second amino acid generally not being Pro.. Functionally, removes 5-oxoproline from various penultimate amino acid residues except L-proline. In Streptococcus suis (strain 98HAH33), this protein is Pyrrolidone-carboxylate peptidase.